The following is an 827-amino-acid chain: Lon protease (827 aa).

Residues 38 to 233 form the Lon N-terminal domain; the sequence is LTLLASKYNV…VLLKYLLKDL (196 aa). 384-391 contributes to the ATP binding site; it reads GPPGVGKT. Residues 619–800 enclose the Lon proteolytic domain; it reads THLPGVAIGL…EEVIQLALQP (182 aa). Active-site residues include Ser706 and Lys749.

The protein belongs to the peptidase S16 family. Homohexamer. Organized in a ring with a central cavity.

The protein localises to the cytoplasm. The enzyme catalyses Hydrolysis of proteins in presence of ATP.. Functionally, ATP-dependent serine protease that mediates the selective degradation of mutant and abnormal proteins as well as certain short-lived regulatory proteins. Required for cellular homeostasis and for survival from DNA damage and developmental changes induced by stress. Degrades polypeptides processively to yield small peptide fragments that are 5 to 10 amino acids long. Binds to DNA in a double-stranded, site-specific manner. This Amoebophilus asiaticus (strain 5a2) protein is Lon protease.